The following is a 250-amino-acid chain: MFFMDSKNLFKKAAELIKSSQKTMVLTGAGISTESGIPDFRSPGTGLWENMDPTEVLSTKVLFNSPEEFYRVGFKILSSMRNAEPNEAHYILSEMEKEGIIAGVITQNIDNLHQKAGSKKVYEVHGNTREGSCLRCGEKVSFELLEEKVAKEEIPPRCDRCGGMLRPDVVLFGDPMPHAFDLALKEVQESDLLIVIGSSLVVAPVNFLPGMVDGLIIINATETPYDYKADVVIREKASYALRNIWNLIKS.

The region spanning 4–250 (MDSKNLFKKA…LRNIWNLIKS (247 aa)) is the Deacetylase sirtuin-type domain. Positions 29, 33, 40, 41, 107, 109, 110, and 125 each coordinate NAD(+). Nicotinamide is bound at residue F40. The nicotinamide site is built by I109 and D110. Residue H125 is the Proton acceptor of the active site. Residues C133, C136, C158, and C161 each contribute to the Zn(2+) site. NAD(+) is bound by residues S198, S199, and N219.

The protein belongs to the sirtuin family. Class U subfamily. It depends on Zn(2+) as a cofactor.

It is found in the cytoplasm. It catalyses the reaction N(6)-acetyl-L-lysyl-[protein] + NAD(+) + H2O = 2''-O-acetyl-ADP-D-ribose + nicotinamide + L-lysyl-[protein]. Functionally, NAD-dependent protein deacetylase which modulates the activities of several enzymes which are inactive in their acetylated form. The chain is NAD-dependent protein deacetylase 2 from Caldanaerobacter subterraneus subsp. tengcongensis (strain DSM 15242 / JCM 11007 / NBRC 100824 / MB4) (Thermoanaerobacter tengcongensis).